Here is a 280-residue protein sequence, read N- to C-terminus: Large ribosomal subunit protein uL2 (280 aa).

2 disordered regions span residues serine 27–lysine 59 and valine 225–arginine 280. 2 stretches are compositionally biased toward basic residues: residues leucine 37–lysine 59 and isoleucine 268–arginine 280.

It belongs to the universal ribosomal protein uL2 family. Part of the 50S ribosomal subunit. Forms a bridge to the 30S subunit in the 70S ribosome.

One of the primary rRNA binding proteins. Required for association of the 30S and 50S subunits to form the 70S ribosome, for tRNA binding and peptide bond formation. It has been suggested to have peptidyltransferase activity; this is somewhat controversial. Makes several contacts with the 16S rRNA in the 70S ribosome. The chain is Large ribosomal subunit protein uL2 from Mycobacterium bovis (strain ATCC BAA-935 / AF2122/97).